The sequence spans 261 residues: DNA repair protein RecO (261 aa).

The protein belongs to the RecO family.

In terms of biological role, involved in DNA repair and RecF pathway recombination. The sequence is that of DNA repair protein RecO from Chlorobium phaeobacteroides (strain BS1).